The chain runs to 504 residues: tRNA (uracil-5-)-methyltransferase homolog B (504 aa).

The transit peptide at 1–16 (MAGLKRRVPLHSLRYF) directs the protein to the mitochondrion. S-adenosyl-L-methionine contacts are provided by Gln-323, Glu-373, and Asn-423. Cys-451 serves as the catalytic Nucleophile. Catalysis depends on Glu-497, which acts as the Proton acceptor.

The protein belongs to the class I-like SAM-binding methyltransferase superfamily. RNA M5U methyltransferase family.

The protein localises to the mitochondrion. Its subcellular location is the mitochondrion matrix. The catalysed reaction is uridine(54) in tRNA + S-adenosyl-L-methionine = 5-methyluridine(54) in tRNA + S-adenosyl-L-homocysteine + H(+). It catalyses the reaction a uridine in 12S rRNA + S-adenosyl-L-methionine = a 5-methyluridine in 12S rRNA + S-adenosyl-L-homocysteine + H(+). In terms of biological role, mitochondrial S-adenosyl-L-methionine-dependent methyltransferase that catalyzes the formation of 5-methyl-uridine in tRNAs and 12S rRNA. Catalyzes the methylation of uridine at position 54 (m5U54) in all tRNAs. Specifically methylates the uridine in position 429 of 12S rRNA (m5U429). Does not affect RNA stability or mitochondrial translation. This Homo sapiens (Human) protein is tRNA (uracil-5-)-methyltransferase homolog B.